The primary structure comprises 127 residues: Protein translocase subunit SecE (127 aa).

3 consecutive transmembrane segments (helical) span residues 17-37 (VKWI…MCFY), 41-61 (LFIR…TMIY), and 95-115 (FIVI…DSVI).

The protein belongs to the SecE/SEC61-gamma family. As to quaternary structure, component of the Sec protein translocase complex. Heterotrimer consisting of SecY, SecE and SecG subunits. The heterotrimers can form oligomers, although 1 heterotrimer is thought to be able to translocate proteins. Interacts with the ribosome. Interacts with SecDF, and other proteins may be involved. Interacts with SecA.

Its subcellular location is the cell inner membrane. Essential subunit of the Sec protein translocation channel SecYEG. Clamps together the 2 halves of SecY. May contact the channel plug during translocation. The chain is Protein translocase subunit SecE from Buchnera aphidicola subsp. Acyrthosiphon pisum (strain APS) (Acyrthosiphon pisum symbiotic bacterium).